We begin with the raw amino-acid sequence, 399 residues long: Peroxisome assembly protein 12 (399 aa).

A disordered region spans residues 1–24 (MSFYSNLPSAGQSSRGSSTSGRNG). At 1–33 (MSFYSNLPSAGQSSRGSSTSGRNGVGLEPLYPT) the chain is on the peroxisomal matrix side. The span at 9 to 24 (SAGQSSRGSSTSGRNG) shows a compositional bias: low complexity. The chain crosses the membrane as a helical span at residues 34 to 62 (IFEIMSSQEIDSLLPASIRYLLANHLVAN). The Cytoplasmic portion of the chain corresponds to 63 to 67 (FPNRY). A helical membrane pass occupies residues 68-92 (TLRLNKYFFEWFQAIKGFVEWYHLK). Residues 93–136 (TYNSTFIDRFYGLQLFSSRDRNLALTQCLNPKGQSEWPQGLQLN) are Peroxisomal matrix-facing. A helical transmembrane segment spans residues 137–168 (QQQKSVIFLEKIILPYITAKLDEILEKISMNN). Residues 169-171 (IFS) lie on the Cytoplasmic side of the membrane. Residues 172 to 208 (SDETENKWPKRAFLRIYPFIKKLLALSNLLVKLLFLT) form a helical membrane-spanning segment. The Peroxisomal matrix portion of the chain corresponds to 209–277 (KRTGSVSLLQ…PRFLTFMGSQ (69 aa)). A helical membrane pass occupies residues 278-305 (FFPTFIFVLRVYQWWTTQDMTTKLQKRV). Residues 306–399 (NDLDEDIPRP…VVTGIRKLLI (94 aa)) lie on the Cytoplasmic side of the membrane. 4 residues coordinate Zn(2+): Cys334, Cys337, Cys354, and Cys357. An RING-type; degenerate zinc finger spans residues 334-373 (CPVCEKTVQNPCVLETGYVACYPCAISYLVNNEGHCPVTN).

The protein belongs to the pex2/pex10/pex12 family. Component of the PEX2-PEX10-PEX12 retrotranslocation channel, composed of PEX2, PEX10 and PEX12.

It is found in the peroxisome membrane. Its pathway is protein modification; protein ubiquitination. Functionally, component of a retrotranslocation channel required for peroxisome organization by mediating export of the PEX5 receptor from peroxisomes to the cytosol, thereby promoting PEX5 recycling. The retrotranslocation channel is composed of PEX2, PEX10 and PEX12; each subunit contributing transmembrane segments that coassemble into an open channel that specifically allows the passage of PEX5 through the peroxisomal membrane. PEX12 also regulates PEX5 recycling by activating the E3 ubiquitin-protein ligase activity of PEX10. When PEX5 recycling is compromised, PEX12 stimulates PEX10-mediated polyubiquitination of PEX5, leading to its subsequent degradation. The chain is Peroxisome assembly protein 12 from Saccharomyces cerevisiae (strain ATCC 204508 / S288c) (Baker's yeast).